Consider the following 283-residue polypeptide: Small ribosomal subunit protein uS3 (283 aa).

A KH type-2 domain is found at 39-107; that stretch reads VRAYLKTKLK…PVHVNIEEIR (69 aa). The interval 219-283 is disordered; that stretch reads ASDDDKKRRG…AAVSAEKAGE (65 aa). Over residues 221–236 the composition is skewed to basic and acidic residues; the sequence is DDDKKRRGPRRDDGKP. Over residues 237–260 the composition is skewed to low complexity; the sequence is SGRPRAPRPEGQPGAAAPGSAPAA.

Belongs to the universal ribosomal protein uS3 family. In terms of assembly, part of the 30S ribosomal subunit. Forms a tight complex with proteins S10 and S14.

Its function is as follows. Binds the lower part of the 30S subunit head. Binds mRNA in the 70S ribosome, positioning it for translation. This chain is Small ribosomal subunit protein uS3, found in Janthinobacterium sp. (strain Marseille) (Minibacterium massiliensis).